We begin with the raw amino-acid sequence, 571 residues long: Proline--tRNA ligase (571 aa).

The protein belongs to the class-II aminoacyl-tRNA synthetase family. ProS type 1 subfamily. As to quaternary structure, homodimer.

It is found in the cytoplasm. The catalysed reaction is tRNA(Pro) + L-proline + ATP = L-prolyl-tRNA(Pro) + AMP + diphosphate. Functionally, catalyzes the attachment of proline to tRNA(Pro) in a two-step reaction: proline is first activated by ATP to form Pro-AMP and then transferred to the acceptor end of tRNA(Pro). As ProRS can inadvertently accommodate and process non-cognate amino acids such as alanine and cysteine, to avoid such errors it has two additional distinct editing activities against alanine. One activity is designated as 'pretransfer' editing and involves the tRNA(Pro)-independent hydrolysis of activated Ala-AMP. The other activity is designated 'posttransfer' editing and involves deacylation of mischarged Ala-tRNA(Pro). The misacylated Cys-tRNA(Pro) is not edited by ProRS. This Shewanella baltica (strain OS155 / ATCC BAA-1091) protein is Proline--tRNA ligase.